The chain runs to 441 residues: MSEMTPREIVHELDSHIIGQQKAKRSVAIALRNRWRRMQLAADLRQEVTPKNILMIGPTGVGKTEIARRLARLAKAPFIKVEATKFTEVGYVGKEVEQIIRDLTDSAIKLTREEQMAKCKFRAEEAAEERILDALLPKPKEDWDNEKPSDNATRQVFRKKLREGQLDDKEIEIDIAAPQAGIEIMSPPGMEEMTNQLQSMFQNMGPGASKRRKMPIKEAHKLLIEEEAAKLVNADDLKEQAIELVEQHGIVFLDEIDKICKRGESSGPDVSREGVQRDLLPLVEGCTVNTKHGMVKTDHILFIASGAFQMSKPSDLIPELQGRLPIRVELEALSADDFKRILTEPHASLTEQYVALMGTEGVEVEFKDSGIDAIAEAAWQVNERTENIGARRLHTVMERLMEELSYEASDKSGSVTVVDADYVKAHLDNLVQDEDLSRFIL.

ATP is bound by residues Ile-18, 60–65 (GVGKTE), Asp-254, Glu-319, and Arg-391.

It belongs to the ClpX chaperone family. HslU subfamily. A double ring-shaped homohexamer of HslV is capped on each side by a ring-shaped HslU homohexamer. The assembly of the HslU/HslV complex is dependent on binding of ATP.

It localises to the cytoplasm. Functionally, ATPase subunit of a proteasome-like degradation complex; this subunit has chaperone activity. The binding of ATP and its subsequent hydrolysis by HslU are essential for unfolding of protein substrates subsequently hydrolyzed by HslV. HslU recognizes the N-terminal part of its protein substrates and unfolds these before they are guided to HslV for hydrolysis. The protein is ATP-dependent protease ATPase subunit HslU of Shewanella piezotolerans (strain WP3 / JCM 13877).